Reading from the N-terminus, the 712-residue chain is Lactoperoxidase (712 aa).

A signal peptide spans 1–21 (MLVCLHLQVFLASVALFEVAA). The propeptide occupies 22-117 (SDTIAQAAST…TDPSLDLTAL (96 aa)). Asn106 is a glycosylation site (N-linked (GlcNAc...) (complex) asparagine; alternate). Asn106 carries an N-linked (GlcNAc...) (hybrid) asparagine; alternate glycan. 4 disulfide bridges follow: Cys123/Cys284, Cys132/Cys145, Cys246/Cys256, and Cys250/Cys274. Asn212 carries an N-linked (GlcNAc...) (complex) asparagine; alternate glycan. Asn212 carries N-linked (GlcNAc...) (hybrid) asparagine; alternate glycosylation. Asp225 is a heme b binding site. His226 serves as the catalytic Proton acceptor. A Ca(2+)-binding site is contributed by Asp227. Residues Thr301, Phe303, Asp305, and Ser307 each contribute to the Ca(2+) site. Residue Ser315 is modified to Phosphoserine. Asn322 carries N-linked (GlcNAc...) (high mannose) asparagine glycosylation. An intrachain disulfide couples Cys354 to Cys365. The N-linked (GlcNAc...) asparagine glycan is linked to Asn358. A heme b-binding site is contributed by Glu375. An N-linked (GlcNAc...) (complex) asparagine; alternate glycan is attached at Asn449. Asn449 is a glycosylation site (N-linked (GlcNAc...) (hybrid) asparagine; alternate). Residue Asn449 is glycosylated (N-linked (GlcNAc...) (high mannose) asparagine; alternate). Residue His468 participates in heme b binding. At Tyr482 the chain carries 3'-nitrotyrosine. 2 cysteine pairs are disulfide-bonded: Cys573-Cys630 and Cys671-Cys696.

Belongs to the peroxidase family. XPO subfamily. Requires Ca(2+) as cofactor. Heme b is required as a cofactor. Mammary gland; milk.

It is found in the secreted. The protein localises to the cytoplasm. It catalyses the reaction 2 a phenolic donor + H2O2 = 2 a phenolic radical donor + 2 H2O. The catalysed reaction is thiocyanate + H2O2 + H(+) = hypothiocyanous acid + H2O. The enzyme catalyses iodide + H2O2 = hypoiodite + H2O. Inhibited by small molecule methimazole (MMZ). Functionally, heme-containing oxidoreductase which catalyzes the conversion of thiocyanate (SCN(-)) into antimicrobial agent hypothiocyanous acid (OSCN(-)) in the presence of hydrogen peroxide (H2O2). Also involved in the conversion of iodide (I(-)) into hypoiodite (IO(-)) in the presence of H2O2. Responsible for the inactivation of a wide range of micro-organisms and hence, important component of defense mechanism. Shows antibacterial properties against several Gram-positive bacteria including some Staphylococcus species and Gram-negative bacteria including E.coli, P.aeruginosa and some Salmonella species. Inhibits the growth of several fungi including A.niger, Trichoderma species, C.cassicola, P.meadii and C.salmonicolor. Does not have anti-fungal activity towards C.albicans and Pythium species. May protect the udder from infection and may promote growth in newborns. May be implicated in airway host defense against infection. May contribute to maintaining an appropriate H2O2 cellular level, therefore protecting cells from H2O2-caused injuries and inflammation. The protein is Lactoperoxidase (LPO) of Capra hircus (Goat).